We begin with the raw amino-acid sequence, 662 residues long: Transmembrane 9 superfamily member 2 (662 aa).

A signal peptide spans 1 to 28; it reads MSSRPPASPPAQGSRLLLLSLLLLGTVP. Over 29-299 the chain is Lumenal; sequence GPRPGSAFYL…LESMPHTHIQ (271 aa). A helical membrane pass occupies residues 300-320; the sequence is WFSIMNSLVIVLFLSGMVAMI. At 321-373 the chain is on the cytoplasmic side; the sequence is MLRTLHKDIARYNQMDSTEDAQEEFGWKLVHGDIFRPPRKGMLLSVFLGSGTQ. Residues 374–394 form a helical membrane-spanning segment; the sequence is ILIMTFVTLFFACLGFLSPAN. Over 395-397 the chain is Lumenal; it reads RGA. A helical membrane pass occupies residues 398–418; it reads LMTCAVVLWVLLGTPAGYVAA. At 419-436 the chain is on the cytoplasmic side; the sequence is RFYKSFGGEKWKTNVLLT. A helical transmembrane segment spans residues 437–457; it reads SFLCPGIVFADFFIMNLILWG. At 458-465 the chain is on the lumenal side; that stretch reads EGSSAAIP. Residues 466-486 traverse the membrane as a helical segment; the sequence is FGTLVAILALWFCISVPLTFI. Residues 487-521 lie on the Cytoplasmic side of the membrane; the sequence is GAYFGFKKNAIEHPVRTNQIPRQIPEQSFYTKPLP. A helical transmembrane segment spans residues 522-542; the sequence is GIIMGGILPFGCIFIQLFFIL. Topologically, residues 543-553 are lumenal; sequence NSIWSHQMYYM. A helical membrane pass occupies residues 554–574; the sequence is FGFLFLVFIILVITCSEATIL. The Cytoplasmic segment spans residues 575–590; that stretch reads LCYFHLCAEDYHWQWR. The helical transmembrane segment at 591 to 611 threads the bilayer; that stretch reads SFLTSGFTAVYFLIYAIHYFF. The Lumenal portion of the chain corresponds to 612–630; it reads SKLQITGTASTILYFGYTM. Residues 631 to 651 traverse the membrane as a helical segment; the sequence is IMVLIFFLFTGTIGFFACFWF. Over 652–662 the chain is Cytoplasmic; the sequence is VTKIYSVVKVD.

It belongs to the nonaspanin (TM9SF) (TC 9.A.2) family.

It is found in the endosome membrane. The protein resides in the golgi outpost. Its subcellular location is the cytoplasm. The protein localises to the cytoskeleton. It localises to the microtubule organizing center. In the intracellular compartments, may function as a channel or small molecule transporter. The sequence is that of Transmembrane 9 superfamily member 2 (Tm9sf2) from Mus musculus (Mouse).